Reading from the N-terminus, the 718-residue chain is Origin of replication complex subunit 3 (718 aa).

Residues 26-43 (GAAASSSSSSAPSLPSSG) show a composition bias toward low complexity. Positions 26 to 75 (GAAASSSSSSAPSLPSSGRARRRIDVSGLASPNPKPGKRSRDDDAAEDDD) are disordered. The short motif at 659–666 (IKRKPHTS) is the Nuclear localization signal element.

This sequence belongs to the ORC3 family. As to quaternary structure, component of the origin recognition complex (ORC) composed of at least ORC1, ORC2, ORC3, ORC4, ORC5 and ORC6. ORC is regulated in a cell-cycle and development dependent manner. It is sequentially assembled at the exit from anaphase of mitosis and disassembled as cells enter S phase. In terms of tissue distribution, expressed at low levels in the shoot apical meristem (SAM), leaves, ears and roots (including root tips).

It localises to the nucleus. In terms of biological role, component of the origin recognition complex (ORC) that binds origins of replication. DNA-binding is ATP-dependent. The specific DNA sequences that define origins of replication have not been identified yet. The sequence is that of Origin of replication complex subunit 3 from Oryza sativa subsp. japonica (Rice).